A 122-amino-acid chain; its full sequence is Basic phospholipase A2 homolog (122 aa).

7 cysteine pairs are disulfide-bonded: Cys-26-Cys-116, Cys-28-Cys-44, Cys-43-Cys-96, Cys-49-Cys-122, Cys-50-Cys-89, Cys-57-Cys-82, and Cys-75-Cys-87. The tract at residues 106–117 is important for membrane-damaging activities in eukaryotes and bacteria; heparin-binding; it reads KKHRVTVKFLCK.

This sequence belongs to the phospholipase A2 family. Group II subfamily. K49 sub-subfamily. In terms of assembly, homodimer; non-covalently linked. As to expression, expressed by the venom gland.

It is found in the secreted. Functionally, snake venom phospholipase A2 (PLA2) that has almost no phospholipase A2 activity. Is myotoxic. Displays edema-inducing activities. A model of myotoxic mechanism has been proposed: an apo Lys49-PLA2 is activated by the entrance of a hydrophobic molecule (e.g. fatty acid) at the hydrophobic channel of the protein leading to a reorientation of a monomer. This reorientation causes a transition between 'inactive' to 'active' states, causing alignment of C-terminal and membrane-docking sites (MDoS) side-by-side and putting the membrane-disruption sites (MDiS) in the same plane, exposed to solvent and in a symmetric position for both monomers. The MDoS region stabilizes the toxin on membrane by the interaction of charged residues with phospholipid head groups. Subsequently, the MDiS region destabilizes the membrane with penetration of hydrophobic residues. This insertion causes a disorganization of the membrane, allowing an uncontrolled influx of ions (i.e. calcium and sodium), and eventually triggering irreversible intracellular alterations and cell death. This is Basic phospholipase A2 homolog from Protobothrops mucrosquamatus (Taiwan habu).